The following is a 142-amino-acid chain: Large ribosomal subunit protein uL16 (142 aa).

Belongs to the universal ribosomal protein uL16 family. As to quaternary structure, part of the 50S ribosomal subunit.

Its function is as follows. Binds 23S rRNA and is also seen to make contacts with the A and possibly P site tRNAs. The chain is Large ribosomal subunit protein uL16 from Thermosipho melanesiensis (strain DSM 12029 / CIP 104789 / BI429).